Reading from the N-terminus, the 122-residue chain is Double-headed protease inhibitor, submandibular gland (122 aa).

Kazal-like domains lie at 10 to 70 (GGRK…ECDI) and 71 to 121 (ECTQ…QCQS). Disulfide bonds link cysteine 16/cysteine 50, cysteine 28/cysteine 47, cysteine 36/cysteine 68, cysteine 72/cysteine 101, cysteine 79/cysteine 98, and cysteine 87/cysteine 119.

Its subcellular location is the secreted. This inhibitor is composed of two homologous actively inhibiting halves: one which inhibits trypsin, the other which inhibits elastase. The polypeptide is Double-headed protease inhibitor, submandibular gland (Martes martes (European pine marten)).